A 383-amino-acid chain; its full sequence is Chaperone protein DnaJ (383 aa).

In terms of domain architecture, J spans 5 to 70; that stretch reads DYYELLGVSR…QKRAAYDRFG (66 aa). Residues 140–219 form a CR-type zinc finger; that stretch reads GTKTEIRVPT…CSGAGTVPRE (80 aa). 8 residues coordinate Zn(2+): cysteine 153, cysteine 156, cysteine 171, cysteine 174, cysteine 193, cysteine 196, cysteine 207, and cysteine 210. 4 CXXCXGXG motif repeats span residues 153-160, 171-178, 193-200, and 207-214; these read CDACSGTG, CPTCGGAG, and CRVCSGAG.

This sequence belongs to the DnaJ family. In terms of assembly, homodimer. Requires Zn(2+) as cofactor.

Its subcellular location is the cytoplasm. Its function is as follows. Participates actively in the response to hyperosmotic and heat shock by preventing the aggregation of stress-denatured proteins and by disaggregating proteins, also in an autonomous, DnaK-independent fashion. Unfolded proteins bind initially to DnaJ; upon interaction with the DnaJ-bound protein, DnaK hydrolyzes its bound ATP, resulting in the formation of a stable complex. GrpE releases ADP from DnaK; ATP binding to DnaK triggers the release of the substrate protein, thus completing the reaction cycle. Several rounds of ATP-dependent interactions between DnaJ, DnaK and GrpE are required for fully efficient folding. Also involved, together with DnaK and GrpE, in the DNA replication of plasmids through activation of initiation proteins. In Acidiphilium cryptum (strain JF-5), this protein is Chaperone protein DnaJ.